The chain runs to 126 residues: Fluoride-specific ion channel FluC (126 aa).

The next 4 membrane-spanning stretches (helical) occupy residues 1-21 (MTATAFVAIGGGIGAVLRFHA), 33-53 (AVFPWGTFAINVVGSLLMGVL), 72-92 (VGVLGGFTTFSAFSLETALLV), and 97-117 (IGLAALYAAGSVVAGVTGLFL). Gly-76 and Thr-79 together coordinate Na(+).

It belongs to the fluoride channel Fluc/FEX (TC 1.A.43) family.

The protein resides in the cell inner membrane. It catalyses the reaction fluoride(in) = fluoride(out). Its activity is regulated as follows. Na(+) is not transported, but it plays an essential structural role and its presence is essential for fluoride channel function. Fluoride-specific ion channel. Important for reducing fluoride concentration in the cell, thus reducing its toxicity. This chain is Fluoride-specific ion channel FluC, found in Novosphingobium aromaticivorans (strain ATCC 700278 / DSM 12444 / CCUG 56034 / CIP 105152 / NBRC 16084 / F199).